The chain runs to 210 residues: Large ribosomal subunit protein uL4 (210 aa).

A compositionally biased stretch (polar residues) spans 44–54 (KRQGTASTLTR). The segment at 44–94 (KRQGTASTLTRSEVRGGGRKPYKQKGTGRARQGSIRTPLRPGGGVIFGPKP) is disordered. The segment covering 60–71 (GGRKPYKQKGTG) has biased composition (basic residues).

It belongs to the universal ribosomal protein uL4 family. In terms of assembly, part of the 50S ribosomal subunit.

One of the primary rRNA binding proteins, this protein initially binds near the 5'-end of the 23S rRNA. It is important during the early stages of 50S assembly. It makes multiple contacts with different domains of the 23S rRNA in the assembled 50S subunit and ribosome. In terms of biological role, forms part of the polypeptide exit tunnel. This chain is Large ribosomal subunit protein uL4, found in Prochlorococcus marinus subsp. pastoris (strain CCMP1986 / NIES-2087 / MED4).